Reading from the N-terminus, the 98-residue chain is Small ribosomal subunit protein bS20 (98 aa).

Residues 1–12 (MAPRKPSKKVGP) are compositionally biased toward basic residues. The tract at residues 1 to 31 (MAPRKPSKKVGPQKRPSAEKRVITSKKKQLR) is disordered.

This sequence belongs to the bacterial ribosomal protein bS20 family.

Functionally, binds directly to 16S ribosomal RNA. The protein is Small ribosomal subunit protein bS20 of Chlamydia trachomatis serovar A (strain ATCC VR-571B / DSM 19440 / HAR-13).